The chain runs to 167 residues: Phosphopantetheine adenylyltransferase (167 aa).

S8 contributes to the substrate binding site. ATP contacts are provided by residues 8–9 (SF) and H16. Substrate is bound by residues K40, L74, and R88. ATP is bound by residues 89 to 91 (GLR), E99, and 123 to 129 (WSFVSSS).

This sequence belongs to the bacterial CoaD family. In terms of assembly, homohexamer. Mg(2+) is required as a cofactor.

It is found in the cytoplasm. The enzyme catalyses (R)-4'-phosphopantetheine + ATP + H(+) = 3'-dephospho-CoA + diphosphate. The protein operates within cofactor biosynthesis; coenzyme A biosynthesis; CoA from (R)-pantothenate: step 4/5. Its function is as follows. Reversibly transfers an adenylyl group from ATP to 4'-phosphopantetheine, yielding dephospho-CoA (dPCoA) and pyrophosphate. In Deinococcus radiodurans (strain ATCC 13939 / DSM 20539 / JCM 16871 / CCUG 27074 / LMG 4051 / NBRC 15346 / NCIMB 9279 / VKM B-1422 / R1), this protein is Phosphopantetheine adenylyltransferase.